Here is a 513-residue protein sequence, read N- to C-terminus: MRCLTIYTWTFRRLPFIPSTNSASFFSTLRFNMSTANNTQAIVIGGGLAGLSATNTILDLGGNVLLLDKNTAFGGNSVKAASGINAAPTQLQFDQHVSDSVNTFYNDSILSAKSKAKPELLRTLTSKSSSAVDWLSERFGLQMDQLSRLAGHSEPRTHRGTHPDYPFKPLAFVLVDQTEKFAASHPDRLQIKKNARVTRLLTNPNHDKVFGVEYMDLSDKSNHTVYGPVVLATGGYAADYSDDSLLKLYHPEALSLSTTNGPYCTGDGHKMVMSIGGSTVDLDLVQIHPTGFVDPKDPTALTKFLAAEALRGSGAVLLTSQGRRFCDELGYRDYVTGEMMKLKSPVYLVLNSAAAEEVANFIKFYSFKGLMKKMKAEELCSTLNCTKDELASTFSEYNRAAKGEIPDEFGRKYFGKTPLELTDTFTVGEVVPVLHYTMGGVQVDTQSRVLSTNGNVIDGLFAAGEIVGGIHGENRLGGSSLLACVVFGRLAGQGASSTMLRRFIASSTSTASS.

41-55 (AIVIGGGLAGLSATN) lines the FAD pocket. The residue at position 100 (serine 100) is a Phosphoserine. Catalysis depends on residues histidine 288 and arginine 311.

The protein belongs to the FAD-dependent oxidoreductase 2 family. FRD/SDH subfamily. FAD serves as cofactor.

It localises to the cytoplasm. The protein resides in the mitochondrion. It is found in the nucleus. It catalyses the reaction succinate + NAD(+) = fumarate + NADH + H(+). Functionally, irreversibly catalyzes the reduction of fumarate to succinate. This Schizosaccharomyces pombe (strain 972 / ATCC 24843) (Fission yeast) protein is Fumarate reductase (osm1).